Here is a 607-residue protein sequence, read N- to C-terminus: Rap1 GTPase-GDP dissociation stimulator 1-B (607 aa).

ARM repeat units follow at residues 79–118, 170–211, 347–390, 391–431, and 479–519; these read ELMRIPCVEADLIPPLVQLLHSKDQEVLLQTGRALGNICY, DSLQ…NLAE, DGNC…NLAI, PVVN…MLID, and SKDV…LIAA.

In terms of assembly, interacts with ralB. Probably interacts with the post-translationally isoprenylated (geranyl-geranylation) forms of ral proteins. Interacts with both GDP-bound and GTP-bound forms of ralA, but interaction is much stronger with ralA-GDP.

Its subcellular location is the cytoplasm. The protein localises to the cytosol. It localises to the endoplasmic reticulum. The protein resides in the mitochondrion. Its function is as follows. Stimulates GDP/GTP exchange reaction of a group of small GTP-binding proteins (G proteins) including Rap1a/Rap1b, RhoA, RhoB and KRas, by stimulating the dissociation of GDP from and the subsequent binding of GTP to each small G protein. In Xenopus laevis (African clawed frog), this protein is Rap1 GTPase-GDP dissociation stimulator 1-B (rap1gds1-b).